The chain runs to 183 residues: Apo-citrate lyase phosphoribosyl-dephospho-CoA transferase (183 aa).

Belongs to the CitX family.

The enzyme catalyses apo-[citrate lyase ACP] + 2'-(5''-triphospho-alpha-D-ribosyl)-3'-dephospho-CoA = holo-[citrate lyase ACP] + diphosphate. In terms of biological role, transfers 2-(5''-triphosphoribosyl)-3'-dephosphocoenzyme-A on a serine residue to the apo-acyl carrier protein (gamma chain) of the citrate lyase to yield holo-acyl carrier protein. This chain is Apo-citrate lyase phosphoribosyl-dephospho-CoA transferase, found in Escherichia coli O139:H28 (strain E24377A / ETEC).